Consider the following 321-residue polypeptide: ATP-dependent 6-phosphofructokinase (321 aa).

Residue Gly-12 participates in ATP binding. ADP is bound by residues 22-26 and 55-60; these read RGVVR and RYSVSD. Residues 73 to 74 and 103 to 106 each bind ATP; these read RF and GDGS. Asp-104 is a binding site for Mg(2+). A substrate-binding site is contributed by 127 to 129; it reads TID. Catalysis depends on Asp-129, which acts as the Proton acceptor. ADP is bound at residue Arg-156. Substrate contacts are provided by residues Arg-164 and 171 to 173; that span reads MGR. ADP-binding positions include 187-189, Lys-213, and 215-217; these read GCE and KRH. Residues Glu-224, Arg-245, and 251-254 contribute to the substrate site; that span reads HIQR.

It belongs to the phosphofructokinase type A (PFKA) family. ATP-dependent PFK group I subfamily. Prokaryotic clade 'B1' sub-subfamily. Homotetramer. Requires Mg(2+) as cofactor.

It is found in the cytoplasm. The catalysed reaction is beta-D-fructose 6-phosphate + ATP = beta-D-fructose 1,6-bisphosphate + ADP + H(+). Its pathway is carbohydrate degradation; glycolysis; D-glyceraldehyde 3-phosphate and glycerone phosphate from D-glucose: step 3/4. Allosterically activated by ADP and other diphosphonucleosides, and allosterically inhibited by phosphoenolpyruvate. Catalyzes the phosphorylation of D-fructose 6-phosphate to fructose 1,6-bisphosphate by ATP, the first committing step of glycolysis. The sequence is that of ATP-dependent 6-phosphofructokinase from Histophilus somni (strain 129Pt) (Haemophilus somnus).